The sequence spans 1824 residues: Afadin (1824 aa).

The Ras-associating 1 domain maps to 39 to 133; that stretch reads FHGVMRFYFQ…GRFVLKNEND (95 aa). The disordered stretch occupies residues 128 to 194; it reads LKNENDAIPP…DRPFQGEDVE (67 aa). Residues 146-185 are a coiled coil; it reads EKQEKEGVIQNFKRTLSKKEKKEKKKREKEALRQASDKDD. Over residues 160 to 172 the composition is skewed to basic residues; it reads TLSKKEKKEKKKR. The segment covering 173–189 has biased composition (basic and acidic residues); the sequence is EKEALRQASDKDDRPFQ. Phosphoserine occurs at positions 216, 246, and 256. The Ras-associating 2 domain occupies 246–348; sequence SGGTLRIYAD…LVFQLKRRPP (103 aa). Positions 349–371 are enriched in basic and acidic residues; it reads DHIPKKTKKHLEGKTPKGKERAD. The disordered stretch occupies residues 349 to 378; that stretch reads DHIPKKTKKHLEGKTPKGKERADGSGYGST. Phosphoserine is present on residues serine 391 and serine 424. Residues 426–492 enclose the FHA domain; sequence TEVGTEKLDD…LQSGMKVQFG (67 aa). 5 positions are modified to phosphoserine: serine 512, serine 557, serine 562, serine 589, and serine 655. Residues 534-595 are disordered; sequence FDLGGDIHSG…RQESRTQDAS (62 aa). The span at 580–591 shows a compositional bias: basic and acidic residues; the sequence is QQPDYRRQESRT. Residues 668–908 enclose the Dilute domain; the sequence is NKMVSMMEGV…IENVVTVAEN (241 aa). A PDZ domain is found at 1007–1093; the sequence is IITVTLKKQN…VVTLEVAKQG (87 aa). Residues serine 1083, serine 1107, serine 1126, serine 1140, serine 1143, serine 1172, serine 1173, serine 1182, and serine 1199 each carry the phosphoserine modification. Positions 1107–1223 are disordered; that stretch reads SPMMQRISDR…PRPEAYPIPT (117 aa). Residues 1113–1128 are compositionally biased toward basic and acidic residues; that stretch reads ISDRRGSGKPRPKSEG. The span at 1132-1143 shows a compositional bias: polar residues; sequence YNNSTQNGSPES. Residues 1152–1172 show a composition bias toward basic and acidic residues; sequence SEPKKLPGDDRLMKNRADHRS. Over residues 1190-1210 the composition is skewed to polar residues; sequence ASGTTAKITSVSTGNLCTEEQ. 2 positions are modified to phosphothreonine: threonine 1211 and threonine 1232. Disordered regions lie at residues 1235-1473, 1501-1528, and 1569-1824; these read ASKS…LQRP, SKEE…EKQQ, and RLQE…LNTK. At serine 1238 the chain carries Phosphoserine. Basic and acidic residues-rich tracts occupy residues 1252 to 1262 and 1274 to 1302; these read YEEKPHMHTDS and RSQE…KSDS. Residue serine 1275 is modified to Phosphoserine. A compositionally biased stretch (low complexity) spans 1309–1318; it reads SSSLDSSTSS. Residues 1325–1337 are compositionally biased toward polar residues; the sequence is SSKSVTPASTLTK. Position 1328 is a phosphoserine (serine 1328). Threonine 1330 is subject to Phosphothreonine. Over residues 1345–1356 the composition is skewed to low complexity; the sequence is TPAAIPATPVAV. Residues 1364-1373 are compositionally biased toward pro residues; that stretch reads LPPPPPPPPV. The span at 1407-1441 shows a compositional bias: basic and acidic residues; sequence AERRKREEHQRWYEKEKARLEEERERKRREQERKL. Residues 1408-1448 adopt a coiled-coil conformation; the sequence is ERRKREEHQRWYEKEKARLEEERERKRREQERKLGQMRTQS. 2 positions are modified to phosphoserine: serine 1501 and serine 1512. Basic and acidic residues predominate over residues 1515-1528; the sequence is PWKRDAKEKLEKQQ. The stretch at 1523–1667 forms a coiled coil; that stretch reads KLEKQQQMHI…SRLEAERRRQ (145 aa). A compositionally biased stretch (acidic residues) spans 1578–1589; that stretch reads EDDEEEEDDDVD. A compositionally biased stretch (basic and acidic residues) spans 1597-1677; it reads LEAERRARLQ…HDEAARRLLE (81 aa). The segment covering 1694-1709 has biased composition (pro residues); it reads PPSPSPAPGAPPPPPQ. Serine 1696, serine 1721, serine 1774, serine 1779, and serine 1799 each carry phosphoserine. Positions 1762–1776 are enriched in basic and acidic residues; the sequence is DACRDAKEKRSKSQD. Lysine 1807 carries the post-translational modification N6-acetyllysine. Residues 1813-1824 show a composition bias toward basic and acidic residues; it reads KLTELENELNTK.

Homodimer. Interacts with F-actin, nectin and NECTIN3. Essential for the association of nectin and E-cadherin. Isoform 1/s-afadin does not interact with F-actin. Interacts with ZO-1 and occludin, but probably in an indirect manner. Interacts with RIT1 and RIT2. Interacts with NRXN1 and BCR. Interacts with ADAM10; the interaction locks ADAM10 at adherens junctions following ADAM10 recruitment to adherens junctions by TSPAN33.

Its subcellular location is the cell junction. The protein localises to the adherens junction. In terms of biological role, belongs to an adhesion system, probably together with the E-cadherin-catenin system, which plays a role in the organization of homotypic, interneuronal and heterotypic cell-cell adherens junctions (AJs). Nectin- and actin-filament-binding protein that connects nectin to the actin cytoskeleton. May play a key role in the organization of epithelial structures of the embryonic ectoderm. Essential for the organization of adherens junctions. In Homo sapiens (Human), this protein is Afadin.